The chain runs to 624 residues: MAENGESSGPPRPSRGPAAAQGSAAAPAEPKIIKVTVKTPKEKEEFAVPENSSVQQFKEAISKRFKSQTDQLVLIFAGKILKDQDTLIQHGIHDGLTVHLVIKSQNRPQGQSTQPSNAAGTNTTSASTPRSNSTPISTNSNPFGLGSLGGLAGLSSLGLSSTNFSELQSQMQQQLMASPEMMIQIMENPFVQSMLSNPDLMRQLIMANPQMQQLIQRNPEISHLLNNPDIMRQTLEIARNPAMMQEMMRNQDLALSNLESIPGGYNALRRMYTDIQEPMLNAAQEQFGGNPFASVGSSSSSGEGTQPSRTENRDPLPNPWAPPPATQSSATTSTTTSTGSGSGNSSSNATGNTVAAANYVASIFSTPGMQSLLQQITENPQLIQNMLSAPYMRSMMQSLSQNPDLAAQMMLNSPLFTANPQLQEQMRPQLPAFLQQMQNPDTLSAMSNPRAMQALMQIQQGLQTLATEAPGLIPSFTPGVGVGVLGTAIGPVGPVTPIGPIGPIVPFTPIGPIGPIGPTGPAAPPGSTGSGGPTGPTVSSAAPSETTSPTSESGPNQQFIQQMVQALAGANAPQLPNPEVRFQQQLEQLNAMGFLNREANLQALIATGGDINAAIERLLGSQPS.

Disordered stretches follow at residues 1-32 (MAEN…EPKI) and 106-141 (NRPQ…TNSN). Position 2 is an N-acetylalanine (Ala-2). A compositionally biased stretch (low complexity) spans 15–32 (RGPAAAQGSAAAPAEPKI). Residues 33-107 (IKVTVKTPKE…VHLVIKSQNR (75 aa)) form the Ubiquitin-like domain. Over residues 106 to 115 (NRPQGQSTQP) the composition is skewed to polar residues. The segment covering 116-141 (SNAAGTNTTSASTPRSNSTPISTNSN) has biased composition (low complexity). STI1 domains lie at 178–206 (SPEM…QLIM) and 208–247 (NPQM…MQEM). Positions 287 to 349 (FGGNPFASVG…SGSGNSSSNA (63 aa)) are disordered. Over residues 294–304 (SVGSSSSSGEG) the composition is skewed to low complexity. Residues 316–325 (LPNPWAPPPA) are compositionally biased toward pro residues. Positions 326-349 (TQSSATTSTTTSTGSGSGNSSSNA) are enriched in low complexity. 2 consecutive STI1 domains span residues 379-426 (NPQL…QEQM) and 430-462 (LPAF…QQGL). A run of 12 repeats spans residues 491-493 (PVG), 494-496 (PVT), 497-499 (PIG), 500-502 (PIG), 503-505 (PIV), 506-508 (PFT), 509-511 (PIG), 512-514 (PIG), 515-517 (PIG), 518-520 (PTG), 521-523 (PAA), and 524-526 (PPG). Positions 491–526 (PVGPVTPIGPIGPIVPFTPIGPIGPIGPTGPAAPPG) are 12 X 3 AA tandem repeats of P-X-X. The tract at residues 512 to 556 (PIGPIGPTGPAAPPGSTGSGGPTGPTVSSAAPSETTSPTSESGPN) is disordered. The segment covering 535-553 (GPTVSSAAPSETTSPTSES) has biased composition (low complexity). Positions 581 to 621 (RFQQQLEQLNAMGFLNREANLQALIATGGDINAAIERLLGS) constitute a UBA domain.

In terms of assembly, homodimer. Forms heterodimer with UBQLN1. Binds UBE3A and BTRC. Interacts with the 19S proteasome subunit. Interacts with C9orf72. Interacts with HNRNPA1 and HNRNPU. Found in a complex with UBQLN1 and MAP1LC3A/B/C. Interacts with EPS15, EPN1 and EPN2. Interacts with HERPUD1. Interacts with RAD23A. Interacts with TARDBP. Interacts (via C-terminus) with FAF2 (via N-terminus). Interacts with UBQLN4. Binds CD47. Post-translationally, degraded during macroautophagy.

It is found in the cytoplasm. The protein localises to the nucleus. Its subcellular location is the membrane. The protein resides in the cytoplasmic vesicle. It localises to the autophagosome. Plays an important role in the regulation of different protein degradation mechanisms and pathways including ubiquitin-proteasome system (UPS), autophagy and the endoplasmic reticulum-associated protein degradation (ERAD) pathway. Mediates the proteasomal targeting of misfolded or accumulated proteins for degradation by binding (via UBA domain) to their polyubiquitin chains and by interacting (via ubiquitin-like domain) with the subunits of the proteasome. Plays a role in the ERAD pathway via its interaction with ER-localized proteins FAF2/UBXD8 and HERPUD1 and may form a link between the polyubiquitinated ERAD substrates and the proteasome. Involved in the regulation of macroautophagy and autophagosome formation; required for maturation of autophagy-related protein LC3 from the cytosolic form LC3-I to the membrane-bound form LC3-II and may assist in the maturation of autophagosomes to autolysosomes by mediating autophagosome-lysosome fusion. Negatively regulates the endocytosis of GPCR receptors: AVPR2 and ADRB2, by specifically reducing the rate at which receptor-arrestin complexes concentrate in clathrin-coated pits (CCPs). The chain is Ubiquilin-2 (UBQLN2) from Homo sapiens (Human).